The chain runs to 688 residues: Polyribonucleotide nucleotidyltransferase (688 aa).

Mg(2+) contacts are provided by Asp-484 and Asp-490. One can recognise a KH domain in the interval 550–609 (PQTEIFNVAPDKIIEIIGQGGRVIKEIVEKFEVKIDLNTPSGEVKIMGNKERVLKTKEFI). The 63-residue stretch at 626–688 (DEVLEAQVKR…NKGKIALDLA (63 aa)) folds into the S1 motif domain.

It belongs to the polyribonucleotide nucleotidyltransferase family. The cofactor is Mg(2+).

The protein localises to the cytoplasm. The enzyme catalyses RNA(n+1) + phosphate = RNA(n) + a ribonucleoside 5'-diphosphate. In terms of biological role, involved in mRNA degradation. Catalyzes the phosphorolysis of single-stranded polyribonucleotides processively in the 3'- to 5'-direction. The chain is Polyribonucleotide nucleotidyltransferase from Helicobacter pylori (strain J99 / ATCC 700824) (Campylobacter pylori J99).